Here is a 359-residue protein sequence, read N- to C-terminus: DNA ligase (359 aa).

Residues 32–35 (EIKY), R39, 55–57 (RVS), and E93 contribute to the ATP site. K34 acts as the N6-AMP-lysine intermediate in catalysis. Residue E217 participates in a divalent metal cation binding. Positions 232 and 238 each coordinate ATP.

The protein belongs to the ATP-dependent DNA ligase family. Requires a divalent metal cation as cofactor.

The enzyme catalyses ATP + (deoxyribonucleotide)n-3'-hydroxyl + 5'-phospho-(deoxyribonucleotide)m = (deoxyribonucleotide)n+m + AMP + diphosphate.. Its function is as follows. DNA ligase that seals nicks in double-stranded DNA during DNA replication, DNA recombination and DNA repair in an ATP-dependent reaction. Binds specifically to DNA nicks containing a 3'-OH and a 5'-phosphate group. The polypeptide is DNA ligase (Escherichia phage T7 (Bacteriophage T7)).